A 180-amino-acid chain; its full sequence is D-glycero-beta-D-manno-heptose-1,7-bisphosphate 7-phosphatase (180 aa).

Aspartate 14 acts as the Nucleophile in catalysis. Residues aspartate 14 and aspartate 16 each contribute to the Mg(2+) site. Substrate-binding positions include 14 to 16 (DRD), 22 to 25 (NDHY), and 56 to 59 (TNQS). The active-site Proton donor is aspartate 16. Zn(2+) is bound by residues cysteine 95, histidine 97, cysteine 110, and histidine 112. 113 to 114 (RK) contributes to the substrate binding site. Residue aspartate 139 participates in Mg(2+) binding.

Belongs to the gmhB family. Monomer. Requires Mg(2+) as cofactor.

Its subcellular location is the cytoplasm. It carries out the reaction D-glycero-beta-D-manno-heptose 1,7-bisphosphate + H2O = D-glycero-beta-D-manno-heptose 1-phosphate + phosphate. The protein operates within nucleotide-sugar biosynthesis; ADP-L-glycero-beta-D-manno-heptose biosynthesis; ADP-L-glycero-beta-D-manno-heptose from D-glycero-beta-D-manno-heptose 7-phosphate: step 2/4. It participates in bacterial outer membrane biogenesis; LPS core biosynthesis. Its function is as follows. Converts the D-glycero-beta-D-manno-heptose 1,7-bisphosphate (beta-HBP) intermediate into D-glycero-beta-D-manno-heptose 1-phosphate by removing the phosphate group at the C-7 position. Also catalyzes the dephosphorylation of D-glycero-alpha-D-manno-heptose 1,7-bisphosphate in vitro. The sequence is that of D-glycero-beta-D-manno-heptose-1,7-bisphosphate 7-phosphatase from Rhodopseudomonas palustris (strain ATCC BAA-98 / CGA009).